The chain runs to 413 residues: Aspartate aminotransferase, cytoplasmic (413 aa).

L-aspartate contacts are provided by Gly-39 and Trp-141. Ser-149 is subject to Phosphoserine. Asn-195 provides a ligand contact to L-aspartate. Lys-259 carries the N6-(pyridoxal phosphate)lysine modification. Residue Lys-318 is modified to N6-succinyllysine. L-aspartate is bound at residue Arg-387.

It belongs to the class-I pyridoxal-phosphate-dependent aminotransferase family. In terms of assembly, homodimer. It depends on pyridoxal 5'-phosphate as a cofactor. As to expression, expressed in neurons of the retina. Localizes to the inner and outer plexiform layers, the inner and outer nuclear layer and the outer segments of photoreceptors.

The protein localises to the cytoplasm. It carries out the reaction L-aspartate + 2-oxoglutarate = oxaloacetate + L-glutamate. The enzyme catalyses L-cysteine + 2-oxoglutarate = 2-oxo-3-sulfanylpropanoate + L-glutamate. The catalysed reaction is (2S)-2-aminobutanoate + 2-oxoglutarate = 2-oxobutanoate + L-glutamate. It catalyses the reaction 3-sulfino-L-alanine + 2-oxoglutarate = 3-sulfinopyruvate + L-glutamate. With respect to regulation, inhibited by calcium ions. Its function is as follows. Biosynthesis of L-glutamate from L-aspartate or L-cysteine. Important regulator of levels of glutamate, the major excitatory neurotransmitter of the vertebrate central nervous system. Acts as a scavenger of glutamate in brain neuroprotection. The aspartate aminotransferase activity is involved in hepatic glucose synthesis during development and in adipocyte glyceroneogenesis. Using L-cysteine as substrate, regulates levels of mercaptopyruvate, an important source of hydrogen sulfide. Mercaptopyruvate is converted into H(2)S via the action of 3-mercaptopyruvate sulfurtransferase (3MST). Hydrogen sulfide is an important synaptic modulator and neuroprotectant in the brain. This is Aspartate aminotransferase, cytoplasmic from Mus musculus (Mouse).